Reading from the N-terminus, the 316-residue chain is Thioredoxin reductase (316 aa).

36–43 (ERGIPGGQ) provides a ligand contact to FAD. An intrachain disulfide couples Cys135 to Cys138. 278–287 (DIREKSLRQI) lines the FAD pocket.

Belongs to the class-II pyridine nucleotide-disulfide oxidoreductase family. In terms of assembly, homodimer. Requires FAD as cofactor.

The protein localises to the cytoplasm. The catalysed reaction is [thioredoxin]-dithiol + NADP(+) = [thioredoxin]-disulfide + NADPH + H(+). The chain is Thioredoxin reductase (trxB) from Bacillus subtilis (strain 168).